The chain runs to 138 residues: Large ribosomal subunit protein bL19 (138 aa).

The protein belongs to the bacterial ribosomal protein bL19 family.

Functionally, this protein is located at the 30S-50S ribosomal subunit interface and may play a role in the structure and function of the aminoacyl-tRNA binding site. The chain is Large ribosomal subunit protein bL19 from Rickettsia typhi (strain ATCC VR-144 / Wilmington).